Reading from the N-terminus, the 397-residue chain is Mannosylglycerate synthase (397 aa).

GDP-alpha-D-mannose-binding positions include 7-11 (PFKHE), Ile35, Gln66, Lys76, Asp100, and 100-101 (DA). Residue Asp102 coordinates a divalent metal cation. (R)-glycerate-binding positions include Arg131 and 136-139 (AMIT). Residues Leu163 and Asp192 each contribute to the GDP-alpha-D-mannose site. His217 is an a divalent metal cation binding site. Arg218 and Tyr220 together coordinate GDP-alpha-D-mannose.

Belongs to the glycosyltransferase 78 family. As to quaternary structure, homotetramer. Dimer of dimers. Mg(2+) is required as a cofactor. The cofactor is Ca(2+). Requires Mn(2+) as cofactor. Ni(2+) serves as cofactor. It depends on Co(2+) as a cofactor.

It catalyses the reaction (R)-glycerate + GDP-alpha-D-mannose = (2R)-2-O-(alpha-D-mannosyl)-glycerate + GDP + H(+). Its activity is regulated as follows. Inhibited by GDP. Its function is as follows. Involved in the biosynthesis of the stress protectant 2-O-alpha-D-mannosyl glycerate (MG) which is produced in response to growth at supraoptimal temperature and salinity, and protects several enzymes against inactivation by temperature, freeze-drying and osmotic stress. Catalyzes the condensation of alpha-GDP-D-mannose (GDP-Man) with D-glycerate to produce alpha-mannosyl-D-glycerate. It is specific for GDP-Man, but it can also use alpha-GDP-D-glucose (GDP-Glc), beta-GDP-D-fructose, alpha-UDP-D-mannose and alpha-UDP-D-glucose as sugar donors. It is specific for D-glycerate, but it can also use D-lactate and glycolate as sugar acceptors. This reaction occurs with a net retention of anomeric configuration; the newly formed glycosidic linkage has the same alpha configuration as the sugar donor. The polypeptide is Mannosylglycerate synthase (mgs) (Rhodothermus marinus (Rhodothermus obamensis)).